Reading from the N-terminus, the 927-residue chain is Perchlorate reductase subunit alpha (927 aa).

A signal peptide (tat-type signal) is located at residues 1–31; the sequence is MVQMTRRGFLLASGATLLGSSLSFRTLAAAA. Positions 53-116 constitute a 4Fe-4S Mo/W bis-MGD-type domain; the sequence is DKKTRGAHLI…CAHDYMYGPH (64 aa). Residues histidine 60, cysteine 64, cysteine 68, and cysteine 102 each coordinate [4Fe-4S] cluster. Aspartate 198 is a Mo-bis(molybdopterin guanine dinucleotide) binding site.

The protein belongs to the prokaryotic molybdopterin-containing oxidoreductase family. In terms of assembly, heterotrimer of alpha, beta and gamma subunits. It depends on [4Fe-4S] cluster as a cofactor. Mo-bis(molybdopterin guanine dinucleotide) serves as cofactor. In terms of processing, predicted to be exported by the Tat system. The position of the signal peptide cleavage has not been experimentally proven.

The protein resides in the periplasm. Functionally, component of the perchlorate reductase that catalyzes the reduction of perchlorate to chlorite and allows anaerobic growth on perchlorate as the sole electron acceptor. Is probably also able to reduce chlorate to chlorite. The alpha subunit is likely the catalytic subunit. The protein is Perchlorate reductase subunit alpha (pcrA) of Dechloromonas aromatica (strain RCB).